A 767-amino-acid polypeptide reads, in one-letter code: Glucoamylase S1 (767 aa).

The signal sequence occupies residues 1 to 21 (MQRPFLLAYLVLSLLFNSALG). 2 disordered regions span residues 29–83 (RGSS…ETTI) and 125–149 (TTTV…PTTP). Residues 30–48 (GSSSSNITSSGPSSTPFSS) show a composition bias toward low complexity. Residue N35 is glycosylated (N-linked (GlcNAc...) asparagine). A compositionally biased stretch (polar residues) spans 49–66 (ATESFSTGTTVTPSSSKY). 2 stretches are compositionally biased toward low complexity: residues 71–83 (TETS…ETTI) and 131–149 (STSP…PTTP). N-linked (GlcNAc...) asparagine glycosylation is found at N308, N322, N414, N423, and N434. Positions 348–691 (VSIERIFENI…ASTTLYQLIY (344 aa)) are h subunit. W455 provides a ligand contact to substrate. A glycan (N-linked (GlcNAc...) asparagine) is linked at N513. Catalysis depends on D518, which acts as the Proton acceptor. The Proton donor role is filled by E521. N-linked (GlcNAc...) asparagine glycans are attached at residues N546, N645, N650, N720, and N741. The interval 692–767 (RHISEQHDLV…LKATWEQTGN (76 aa)) is y subunit.

The protein belongs to the glycosyl hydrolase 15 family.

It carries out the reaction Hydrolysis of terminal (1-&gt;4)-linked alpha-D-glucose residues successively from non-reducing ends of the chains with release of beta-D-glucose.. The sequence is that of Glucoamylase S1 (STA1) from Saccharomyces cerevisiae (Baker's yeast).